Consider the following 456-residue polypeptide: Phosphomannomutase (456 aa).

Residue Ser-98 is the Phosphoserine intermediate of the active site. Mg(2+) is bound by residues Ser-98, Asp-245, Asp-247, and Asp-249.

Belongs to the phosphohexose mutase family. Mg(2+) is required as a cofactor.

It carries out the reaction alpha-D-mannose 1-phosphate = D-mannose 6-phosphate. It participates in nucleotide-sugar biosynthesis; GDP-alpha-D-mannose biosynthesis; alpha-D-mannose 1-phosphate from D-fructose 6-phosphate: step 2/2. Its pathway is bacterial outer membrane biogenesis; LPS O-antigen biosynthesis. Involved in GDP-mannose biosynthesis which serves as the activated sugar nucleotide precursor for mannose residues in cell surface polysaccharides. This enzyme participates in synthesis of the LPS O antigen. This Salmonella montevideo protein is Phosphomannomutase (manB).